A 453-amino-acid polypeptide reads, in one-letter code: Cholesterol 7-desaturase nvd (453 aa).

A helical transmembrane segment spans residues 53–73 (IVEYILILTLMFAFSAILYVI). One can recognise a Rieske domain in the interval 126–229 (WFAVAETREL…VVETDGAIWI (104 aa)). [2Fe-2S] cluster is bound by residues Cys167, His169, Cys187, and His190.

It belongs to the cholesterol 7-desaturase family. The cofactor is [2Fe-2S] cluster.

The protein localises to the membrane. The enzyme catalyses cholesterol + NADPH + O2 + H(+) = 7-dehydrocholesterol + NADP(+) + 2 H2O. It catalyses the reaction cholesterol + NADH + O2 + H(+) = 7-dehydrocholesterol + NAD(+) + 2 H2O. The protein operates within steroid hormone biosynthesis; dafachronic acid biosynthesis. Catalyzes the production of 7-dehydrocholesterol (7-DHC or cholesta-5,7-dien-3beta-ol) by inserting a double bond (desaturating) at the C7-C8 single bond of cholesterol. Essential regulator of steroid biosynthesis as this reaction is the first step in the synthesis of the steroid hormone Delta(7)-dafachronic acid. The protein is Cholesterol 7-desaturase nvd of Bombyx mori (Silk moth).